The following is an 89-amino-acid chain: Acylphosphatase (89 aa).

In terms of domain architecture, Acylphosphatase-like spans 3–88 (TLHLQIEGRV…GEYSGFEKRS (86 aa)). Catalysis depends on residues arginine 18 and asparagine 36.

The protein belongs to the acylphosphatase family.

The catalysed reaction is an acyl phosphate + H2O = a carboxylate + phosphate + H(+). The protein is Acylphosphatase (acyP) of Thiobacillus denitrificans (strain ATCC 25259 / T1).